A 107-amino-acid chain; its full sequence is Glutaredoxin 4 (107 aa).

Positions 4–106 (IEKIERQIKD…KIISNAVLNS (103 aa)) constitute a Glutaredoxin domain. Residue Lys21 coordinates glutathione. Position 29 (Cys29) interacts with [2Fe-2S] cluster. Glutathione is bound by residues Arg58, Phe70, and 83–84 (CS).

Belongs to the glutaredoxin family. Monothiol subfamily. In terms of assembly, homodimer.

The protein localises to the cytoplasm. In terms of biological role, monothiol glutaredoxin involved in the biogenesis of iron-sulfur clusters. This Buchnera aphidicola subsp. Schizaphis graminum (strain Sg) protein is Glutaredoxin 4 (grxD).